Here is a 145-residue protein sequence, read N- to C-terminus: ATP synthase epsilon chain (145 aa).

It belongs to the ATPase epsilon chain family. In terms of assembly, F-type ATPases have 2 components, CF(1) - the catalytic core - and CF(0) - the membrane proton channel. CF(1) has five subunits: alpha(3), beta(3), gamma(1), delta(1), epsilon(1). CF(0) has three main subunits: a, b and c.

It localises to the cell membrane. Functionally, produces ATP from ADP in the presence of a proton gradient across the membrane. This chain is ATP synthase epsilon chain, found in Buchnera aphidicola subsp. Baizongia pistaciae (strain Bp).